Reading from the N-terminus, the 1359-residue chain is ABC transporter C family member 1 (1359 aa).

An ABC transmembrane type-1 1 domain is found at 111–394; that stretch reads NKLTIFLQIL…LPNSIQQLQS (284 aa). Transmembrane regions (helical) follow at residues 119–139, 147–167, 214–234, 244–264, 332–352, and 363–383; these read ILTNILSILSPLSLKYFIQFI, SFLAGIGYCILLLIASFSYTF, LLSVDVGIISNFFWIEHMGIF, LALLCWVIGWSGLVGFAIMVI, MIFWIFAEMMKQAVNAIVLVL, and ITLEVAFTTISIFVSLRIPLL. Residues 409–478 form a disordered region; sequence PEIQQNHSSN…QQQQQQQQQQ (70 aa). A compositionally biased stretch (acidic residues) spans 420–433; the sequence is EEEEEDEYDDDINS. Positions 440–450 are enriched in polar residues; sequence HNGSFNWNQVD. A compositionally biased stretch (low complexity) spans 459 to 478; that stretch reads GNQQQQQQQQQQQQQQQQQQ. Residues 470 to 690 enclose the ABC transporter 1 domain; the sequence is QQQQQQQQQQ…IDFESIMKTK (221 aa). 502-509 lines the ATP pocket; it reads GVVGSGKT. Residues 763–1061 enclose the ABC transmembrane type-1 2 domain; that stretch reads LRVYKEYFKH…LEVKMNSVER (299 aa). 5 helical membrane passes run 773 to 793, 819 to 839, 884 to 904, 906 to 926, and 999 to 1021; these read GSSIPLFIMTCIVYMISQIIY, IYLLFIVGFIIFLVIRYFMMA, VDLLLFDLFSDVLYCGSTVLV, IGIMIYISPLIIIPFLLLIGI, and WVAVRLEFISSIVVFLAAFFSLF. A coiled-coil region spans residues 1073 to 1102; it reads NSKINFFRNEQQEEEEEEEEEFDFDNDDYD. Residues 1116 to 1350 form the ABC transporter 2 domain; it reads IEFRNVEIKY…QESRFSKLVK (235 aa). 1150-1157 serves as a coordination point for ATP; sequence GRTGAGKS.

This sequence belongs to the ABC transporter superfamily. ABCC family. Conjugate transporter (TC 3.A.1.208) subfamily.

It is found in the membrane. The polypeptide is ABC transporter C family member 1 (abcC1) (Dictyostelium discoideum (Social amoeba)).